The primary structure comprises 2346 residues: MGEPSSLAKPLELNQHSRFIIGSVSEDNSEDEISNLVKLDLLEEKEGSLSPASVSSDTLSDLGISSLQDGLALHMRSSMSGLHLVKQGRDRKKIDSQRDFTVASPAEFVTRFGGNKVIEKVLIANNGIAAVKCMRSIRRWSYEMFRNERAIRFVVMVTPEDLKANAEYIKMADHYVPVPGGPNNNNYANVELILDIARRIPVQAVWAGWGHASENPKLPELLLKNGIAFMGPPSQAMWALGDKIASSIVAQTAGIPTLPWSGSGLCVDWHENDFSKRILNVPQELYEKGYVKDVDDGLKAAEEVGYPVMIKASEGGGGKGIRKVNNADDFPNLFRQVQAEVPGSPIFVMRLAKQSRHLEVQILADQYGNAISLFGRDCSVQRRHQKIIEEAPAAIATPAVFEHMEQCAVKLARMVGYVSAGTVEYLYSQDGSFYFLELNPRLQVEHPCTEMVADVNLPAAQLQIAMGIPLYRIKDIRMMYGVSPWGDAPIDFENSAHVPCPRGHVIAARITSENPDEGFKPSSGTVQELNFRSNKNVWGYFSVAAAGGLHEFADSQFGHCFSWGENREEAISNMVVALKELSIRGDFRTTVEYLIKLLETESFQLNRIDTGWLDRLIAEKVQAERPDTMLGVVCGALHVADVSLRNSISNFLHSLERGQVLSAHTLLNTVDVELIYEGEKIVLKVTRQSPNSYVVIMNGSCVEVDVHRLSDGGLLLSYDGSSYTTYMKEEVDRYRITIGNKTCVFEKENDPSVLRSPSAGKLIQYIVEDGGHVFAGQCYAEIEVMKMVMTLTAAESGCIHYVKRPGAALDPGCVIAKMQLDNPSKVQQAELHTGSLPRIQSTALRGEKLHRVFHYVLDNLVNVMNGYCLPDPFFSSRVKDWVEGLMKTLRDPSLPLLELQDIMTSVSGRIPPNVEKSIKKEMAQYASNITSVLCQFPSQQIANILDSHAATLNRKSEREVFFMNTQSIVQLVQRYRSGIRGHMKAVVMDLLRQYLRVETQFQNGHYDKCVFALREENKSDMNTVLNYIFSHAQVTKKNLLVTMLIDQLCGRDPTLTDELLNILTELTQLSKTTNAKVALRARQVLIASHLPSYELRHNQVESIFLSAIDMYGHQFCIENLQKLILSETSIFDVLPNFFYHSNQVVRMAALEVYVRRAYIAYELNSVQHRQLKDNTCVVEFQFMLPTSHPNRGNIPTLNRMSFSSNLNHYGMTHVASVSDVLLDNAFTPPCQRMGGMVSFRTFEDFVRIFDEVMGCFCDSPPQSPTFPEAGHTSLYDEDKVPRDEPIHILNVAIKTDCDIEDDSLAAMFREFTQQNKATLVEHGIRRLTFLVAQKDFRKQVNYEVDQRFHREFPKFFTFRARDKFEEDRIYRHLEPALAFQLELNRMRNFDLTAIPCANHKMHLYLGAAKVEVGTEVTDYRFFVRAIIRHSDLVTKEASFEYLQNEGERLLLEAMDELEVAFNNTNVRTDCNHIFLNFVPTVIMDPSKIEESVRSMVMRYGSRLWKLRVLQAELKINIRLTPTGKAIPIRLFLTNESGYYLDISLYKEVTDSRTAQIMFQAYGDKQGPLHGMLINTPYVTKDLLQSKRFQAQSLGTTYIYDIPEMFRQSLIKLWESMSSQAFLPPPPLPSDILTYTELVLDDQGQLVHMNRLPGGNEIGMVAWKMTLKSPEYPDGRDIIVIGNDITYRIGSFGPQEDLLFLRASELARAEGIPRIYVAANSGARIGLAEEIRHMFHVAWVDPEDPYKGYKYLYLTPQDYKRVSALNSVHCEHVEDEGESRYKITDIIGKEEGLGAENLRGSGMIAGESSLAYDEIITISLVTCRAIGIGAYLVRLGQRTIQVENSHLILTGAGALNKVLGREVYTSNNQLGGIQIMHNNGVTHSTVCDDFEGVFTVLHWLSYMPKSVYSSVPLLNSKDPIDRVIEFVPTKAPYDPRWMLAGRPHPTQKGQWLSGFFDYGSFSEIMQPWAQTVVVGRARLGGIPVGVVAVETRTVELSIPADPANLDSEAKIIQQAGQVWFPDSAFKTYQAIKDFNREGLPLMVFANWRGFSGGMKDMYDQVLKFGAYIVDGLRECSQPVMVYIPPQAELRGGSWVVIDPTINPRHMEMYADRESRGSVLEPEGTVEIKFRRKDLVKTMRRVDPVYIHLAERLGTPELSARERKELESKLKEREEFLLPIYHQVAVQFADLHDTPGRMQEKGVINDILDWKTSRTFFYWRLRRLLLEDLVKKKIHNANPELTDGQIQAMLRRWFVEVEGTVKAYVWDNNKDLVEWLEKQLTEEDGVRSVIEENIKYISRDYVLKQIRSLVQANPEVAMDSIVHMTQHISPTQRAEVVRILSTMDSPST.

Residue M1 is modified to N-acetylmethionine. S5, S23, S25, S29, S34, S48, S50, and S53 each carry phosphoserine. Phosphothreonine is present on T58. S78 carries the post-translational modification Phosphoserine. The residue at position 80 (S80) is a Phosphoserine; by AMPK. In terms of domain architecture, Biotin carboxylation spans 117–618 (VIEKVLIANN…DTGWLDRLIA (502 aa)). The region spanning 275-466 (SKRILNVPQE…LPAAQLQIAM (192 aa)) is the ATP-grasp domain. ATP is bound at residue 315 to 320 (GGGGKG). The Mg(2+) site is built by E424, E437, and N439. Positions 424, 437, and 439 each coordinate Mn(2+). R441 is an active-site residue. T610 carries the post-translational modification Phosphothreonine. The Biotinyl-binding domain maps to 745–819 (FEKENDPSVL…DPGCVIAKMQ (75 aa)). N6-biotinyllysine is present on K786. Residues S835, S1201, S1216, and S1218 each carry the phosphoserine modification. T1227 is subject to Phosphothreonine. 3 positions are modified to phosphoserine: S1259, S1263, and S1273. K1334 is subject to N6-acetyllysine. The CoA carboxyltransferase N-terminal domain occupies 1576–1914 (PYVTKDLLQS…SVYSSVPLLN (339 aa)). Residues 1576-2234 (PYVTKDLLQS…EDLVKKKIHN (659 aa)) form a carboxyltransferase region. Positions 1823, 2127, and 2129 each coordinate CoA. A CoA carboxyltransferase C-terminal domain is found at 1918 to 2234 (PIDRVIEFVP…EDLVKKKIHN (317 aa)). T2153 bears the Phosphothreonine mark.

As to quaternary structure, monomer, homodimer, and homotetramer. Can form filamentous polymers. Interacts in its inactive phosphorylated form with the BRCT domains of BRCA1 which prevents ACACA dephosphorylation and inhibits lipid synthesis. Interacts with MID1IP1; interaction with MID1IP1 promotes oligomerization and increases its activity. Mg(2+) is required as a cofactor. Mn(2+) serves as cofactor. Requires biotin as cofactor. In terms of processing, phosphorylation on Ser-1263 is required for interaction with BRCA1. Post-translationally, phosphorylation at Ser-80 by AMPK inactivates enzyme activity. The biotin cofactor is covalently attached to the central biotinyl-binding domain and is required for the catalytic activity. Expressed at high levels in mammary gland.

It localises to the cytoplasm. Its subcellular location is the cytosol. It carries out the reaction hydrogencarbonate + acetyl-CoA + ATP = malonyl-CoA + ADP + phosphate + H(+). It participates in lipid metabolism; malonyl-CoA biosynthesis; malonyl-CoA from acetyl-CoA: step 1/1. Inhibited by phosphorylation. Citrate promotes oligomerization of the protein into filaments that correspond to the most active form of the carboxylase. In terms of biological role, cytosolic enzyme that catalyzes the carboxylation of acetyl-CoA to malonyl-CoA, the first and rate-limiting step of de novo fatty acid biosynthesis. This is a 2 steps reaction starting with the ATP-dependent carboxylation of the biotin carried by the biotin carboxyl carrier (BCC) domain followed by the transfer of the carboxyl group from carboxylated biotin to acetyl-CoA. The chain is Acetyl-CoA carboxylase 1 from Ovis aries (Sheep).